A 165-amino-acid polypeptide reads, in one-letter code: Lymphocyte antigen 6K (165 aa).

The signal sequence occupies residues 1 to 17 (MALLALLLVVALPRVWT). The N-linked (GlcNAc...) asparagine glycan is linked to asparagine 20. Positions 47-141 (ERENTFECQN…VFKEYAGSMG (95 aa)) constitute a UPAR/Ly6 domain. Glycine 138 carries GPI-anchor amidated glycine lipidation. Residues 139-165 (SMGESCGGLWLAILLLLASIAAGLSLS) constitute a propeptide, removed in mature form.

Interacts with TEX101. As to expression, specifically expressed in testis (at protein level).

The protein localises to the secreted. The protein resides in the cytoplasm. It localises to the cell membrane. It is found in the cytoplasmic vesicle. Its subcellular location is the secretory vesicle. The protein localises to the acrosome. The protein resides in the membrane raft. In terms of biological role, required for sperm migration into the oviduct and male fertility by controlling binding of sperm to zona pellucida. May play a role in cell growth. The sequence is that of Lymphocyte antigen 6K from Homo sapiens (Human).